The sequence spans 351 residues: Ferredoxin--NADP reductase (351 aa).

Residues Asp44, Gln52, Tyr57, Ile97, Phe132, Asp296, and Ser337 each coordinate FAD.

It belongs to the ferredoxin--NADP reductase type 2 family. Homodimer. FAD serves as cofactor.

The catalysed reaction is 2 reduced [2Fe-2S]-[ferredoxin] + NADP(+) + H(+) = 2 oxidized [2Fe-2S]-[ferredoxin] + NADPH. The protein is Ferredoxin--NADP reductase of Burkholderia vietnamiensis (strain G4 / LMG 22486) (Burkholderia cepacia (strain R1808)).